A 495-amino-acid chain; its full sequence is Neuronal acetylcholine receptor subunit alpha-3 (495 aa).

An N-terminal signal peptide occupies residues 1 to 21 (MARRSRLRRLLLLLLLPVAST). The Extracellular portion of the chain corresponds to 22–240 (SDAEHRLFER…PLFYTINLII (219 aa)). 2 N-linked (GlcNAc...) asparagine glycosylation sites follow: N45 and N162. Cystine bridges form between C149–C163 and C213–C214. A helical membrane pass occupies residues 241–256 (PCLLISFLTVLVFYLP). Residues 257-258 (SD) lie on the Cytoplasmic side of the membrane. A helical membrane pass occupies residues 259–275 (CGEKVTLCISVLLSLTV). E261 contributes to the Na(+) binding site. The Extracellular segment spans residues 276–297 (FLLVITETIPSTSLVIPLIGEY). A helical membrane pass occupies residues 298–316 (LLFTMIFVTLSIVITVFVL). The Cytoplasmic segment spans residues 317-464 (NVHYRTPTTH…QDDWKYVAMV (148 aa)). 2 positions are modified to phosphoserine: S403 and S406. Residues 465-483 (IDRIFLWVFILVCILGTAG) form a helical membrane-spanning segment. The Extracellular segment spans residues 484–495 (LFLQPLMTRDDA).

This sequence belongs to the ligand-gated ion channel (TC 1.A.9) family. Acetylcholine receptor (TC 1.A.9.1) subfamily. Alpha-3/CHRNA3 sub-subfamily. As to quaternary structure, neuronal AChR is composed of two different types of subunits: alpha and beta. CHRNA3/Alpha-3 subunit can be combined to CHRNB2/beta-2 or CHRNB4/beta-4 to give rise to functional receptors. Part of a complex composed of STUB1/CHIP, VCP/p97, CHRNA3, and UBXN2A that modulates the ubiquitination and endoplasmic reticulum-associated degradation (ERAD) of CHRNA3. Within the complex UBXN2A acts as a scaffold protein required for the interaction of CHRNA3 with VCP/p97, this interaction also inhibits CHRNA3 ubiquitination by STUB1/CHIP and subsequently ERAD. Interacts with UBXN2A (via SEP domain), the interaction is required for the interaction of CHRNA3 in the STUB1:VCP:UBXN2A complex. Interacts with RIC3; which is required for proper folding and assembly. Interacts with LYPD6. Post-translationally, ubiquitinated; by STUB1/CHIP and thereafter degraded by the 26S proteosome complex.

The protein resides in the synaptic cell membrane. Its subcellular location is the cell membrane. The protein localises to the endoplasmic reticulum. It is found in the golgi apparatus. The catalysed reaction is K(+)(in) = K(+)(out). It carries out the reaction Na(+)(in) = Na(+)(out). It catalyses the reaction Ca(2+)(in) = Ca(2+)(out). Activated by a myriad of ligands such as acetylcholine, cytisine, nicotine, choline and epibatidine. The heteropentamer CHRNA3:CHRNB2 activity is blocked by alpha-conotoxins ImI, ImII, PnIA, GID and MII. The heteropentamer CHRNA3:CHRNB4 activity is blocked by the alpha-conotoxin ImI and AuIB. In terms of biological role, component of neuronal acetylcholine receptors (nAChRs) that function as pentameric, ligand-gated cation channels with high calcium permeability among other activities. nAChRs are excitatory neurotrasnmitter receptors formed by a collection of nAChR subunits known to mediate synaptic transmission in the nervous system and the neuromuscular junction. Each nAchR subunit confers differential attributes to channel properties, including activation, deactivation and desensitization kinetics, pH sensitivity, cation permeability, and binding to allosteric modulators. CHRNA3 forms heteropentameric neuronal acetylcholine receptors with CHRNB2 and CHRNB4. CHRNA3:CHRNB4 being predominant in neurons of the autonomic ganglia, it is known as ganglionic nicotinic receptor. CHRNA3:CHRNB4 also plays an important role in the habenulo-interpeduncular tract, modulating the mesolimbic dopamine system and affecting reward circuits and addiction. Hypothalamic CHRNA3:CHRNB4 nAChR activation by nicotine leads to activation of POMC neurons and a decrease in food intake. Also expressed in the urothelium where it modulates reflex bladder activity by increasing intracellular calcium through extracellular influx and basal ATP release. This Bos taurus (Bovine) protein is Neuronal acetylcholine receptor subunit alpha-3 (CHRNA3).